The primary structure comprises 169 residues: MNTTVKRIDPASLNLKEQVVAINRVTKVVKGGKNLSFSALVVIGDPSAKVVGYGVGKAKEVPSAIRKGIEAAKKNLRRINSLDTTIPHQVLGVFASSQVLLKPASPGTGVIAGGAVRAVITACGVPNVLTKSIGRRNPHNVVKATIVALEMLRDRNTVAEMRGLAVEKL.

The region spanning 15-79 (LKEQVVAINR…EAAKKNLRRI (65 aa)) is the S5 DRBM domain.

Belongs to the universal ribosomal protein uS5 family. In terms of assembly, part of the 30S ribosomal subunit. Contacts proteins S4 and S8.

With S4 and S12 plays an important role in translational accuracy. Its function is as follows. Located at the back of the 30S subunit body where it stabilizes the conformation of the head with respect to the body. In Solibacter usitatus (strain Ellin6076), this protein is Small ribosomal subunit protein uS5.